Reading from the N-terminus, the 206-residue chain is Small ribosomal subunit protein uS4 (206 aa).

An S4 RNA-binding domain is found at 96–156 (GRLDNVVYRM…EKAKKQSRVK (61 aa)).

It belongs to the universal ribosomal protein uS4 family. Part of the 30S ribosomal subunit. Contacts protein S5. The interaction surface between S4 and S5 is involved in control of translational fidelity.

One of the primary rRNA binding proteins, it binds directly to 16S rRNA where it nucleates assembly of the body of the 30S subunit. Its function is as follows. With S5 and S12 plays an important role in translational accuracy. This chain is Small ribosomal subunit protein uS4, found in Cronobacter sakazakii (strain ATCC BAA-894) (Enterobacter sakazakii).